A 296-amino-acid polypeptide reads, in one-letter code: tRNA dimethylallyltransferase (296 aa).

8 to 15 (GPTGSGKT) is a binding site for ATP. 10–15 (TGSGKT) lines the substrate pocket. The segment at 32 to 35 (DSRQ) is interaction with substrate tRNA.

Belongs to the IPP transferase family. Monomer. Mg(2+) is required as a cofactor.

The enzyme catalyses adenosine(37) in tRNA + dimethylallyl diphosphate = N(6)-dimethylallyladenosine(37) in tRNA + diphosphate. Functionally, catalyzes the transfer of a dimethylallyl group onto the adenine at position 37 in tRNAs that read codons beginning with uridine, leading to the formation of N6-(dimethylallyl)adenosine (i(6)A). This is tRNA dimethylallyltransferase from Leptospira biflexa serovar Patoc (strain Patoc 1 / Ames).